Here is a 235-residue protein sequence, read N- to C-terminus: Protein GMH1 homolog (235 aa).

The Cytoplasmic portion of the chain corresponds to 1–54 (MSRSFRNGFRLLKLSQMDFERAWWDMANLFRAPRRVYRSITLRKQNINRYGRED). A helical membrane pass occupies residues 55-75 (FSFIVLFSCMIVISALLWALF). Residues 76 to 88 (YMNTPKGYVTTIT) lie on the Lumenal side of the membrane. Residues 89–109 (FMLFVDFGAVGVIMATMYYFI) traverse the membrane as a helical segment. Residues 110 to 140 (AKRFLMKSNDTILSSTDYQLEWNYCFDVHCN) are Cytoplasmic-facing. A helical membrane pass occupies residues 141–161 (SFFPSFVLLYVIQLFLLPVIT). Topologically, residues 162–175 (RDNFISLFMGNTLY) are lumenal. The chain crosses the membrane as a helical span at residues 176 to 196 (LVALCYYSYLTFIGYQILPFL). At 197 to 201 (KNTHA) the chain is on the cytoplasmic side. A helical transmembrane segment spans residues 202–222 (LLLPIPMFFIMWALSLLGFNV). Residues 223-235 (PKHVVDVYFGKSA) are Lumenal-facing.

Belongs to the unc-50 family.

The protein localises to the endoplasmic reticulum membrane. Has a role in meiosis. In Schizosaccharomyces pombe (strain 972 / ATCC 24843) (Fission yeast), this protein is Protein GMH1 homolog (mug16).